Consider the following 971-residue polypeptide: Reversion-inducing cysteine-rich protein with Kazal motifs (971 aa).

A signal peptide spans 1–22 (MATVRASLRGALLLLLAVAGVA). The Knot 1 repeat unit spans residues 37–84 (CCNHSKDNQMCRDVCEQIFSSKSESRLKHLLQRAPDYCPETMVEIWNC). Residues 37 to 338 (CCNHSKDNQM…NPVEVSMLTC (302 aa)) form a 5 X Knot repeats region. N-linked (GlcNAc...) asparagine glycosylation is found at Asn39 and Asn86. Knot repeat units lie at residues 104–141 (CCEL…LFSC) and 151–197 (CCSY…LIHC). N-linked (GlcNAc...) asparagine glycosylation is present at Asn200. Knot repeat units lie at residues 216–263 (CCDR…LWQC) and 292–338 (CCSK…MLTC). Residues Asn297 and Asn352 are each glycosylated (N-linked (GlcNAc...) asparagine). Kazal-like domains are found at residues 627 to 673 (TFTG…SCMS), 698 to 752 (TFDK…PCQP), and 753 to 789 (FCRA…DCQA). Disulfide bonds link Cys633-Cys658, Cys635-Cys654, Cys643-Cys671, Cys716-Cys735, Cys724-Cys750, and Cys761-Cys787. Ser942 is lipidated: GPI-anchor amidated serine. Positions 943–971 (AGVRARPSCHSLLLPLSLGLALHLLWTYN) are cleaved as a propeptide — removed in mature form.

The protein belongs to the RECK family. As to quaternary structure, interacts (via knot repeats) with WNT7A (via disordered linker region); the interaction is direct. Interacts (via knot repeats) with WNT7B (via disordered linker region); the interaction is direct. Interacts with ADGRA2; the interaction is direct. Interacts with MMP9. N-glycosylated. Expressed in various tissues and untransformed cells. It is undetectable in tumor-derived cell lines and oncogenically transformed cells.

It localises to the cell membrane. Functionally, functions together with ADGRA2 to enable brain endothelial cells to selectively respond to Wnt7 signals (WNT7A or WNT7B). Plays a key role in Wnt7-specific responses: required for central nervous system (CNS) angiogenesis and blood-brain barrier regulation. Acts as a Wnt7-specific coactivator of canonical Wnt signaling by decoding Wnt ligands: acts by interacting specifically with the disordered linker region of Wnt7, thereby conferring ligand selectivity for Wnt7. ADGRA2 is then required to deliver RECK-bound Wnt7 to frizzled by assembling a higher-order RECK-ADGRA2-Fzd-LRP5-LRP6 complex. Also acts as a serine protease inhibitor: negatively regulates matrix metalloproteinase-9 (MMP9) by suppressing MMP9 secretion and by direct inhibition of its enzymatic activity. Also inhibits metalloproteinase activity of MMP2 and MMP14 (MT1-MMP). This chain is Reversion-inducing cysteine-rich protein with Kazal motifs, found in Homo sapiens (Human).